The chain runs to 463 residues: Succinate--CoA ligase [ADP-forming] subunit beta, mitochondrial (463 aa).

The N-terminal 53 residues, 1 to 53 (MAASMFYGRQLAAAALRSHRPQTTLRAAAQVLGNSGLFNKHGLQVQQQQQRTL), are a transit peptide targeting the mitochondrion. In terms of domain architecture, ATP-grasp spans 61 to 288 (MELLQEAGVS…SNSAYRQKKI (228 aa)). Position 78 is an N6-acetyllysine (Lys78). At Tyr84 the chain carries Phosphotyrosine. Lys88 carries the post-translational modification N6-acetyllysine; alternate. Lys88 is subject to N6-succinyllysine; alternate. Residues Lys98 and 105–107 (GRG) contribute to the ATP site. Residues Lys129, Lys139, Lys143, and Lys216 each carry the N6-acetyllysine modification. The Mg(2+) site is built by Asn258 and Asp272. Position 279 is a phosphoserine (Ser279). Residue Asn323 coordinates substrate. Position 341 is a phosphothreonine (Thr341). The residue at position 368 (Lys368) is an N6-acetyllysine. 380 to 382 (GIM) is a binding site for substrate. Residue Lys438 is modified to N6-acetyllysine.

Belongs to the succinate/malate CoA ligase beta subunit family. ATP-specific subunit beta subfamily. In terms of assembly, heterodimer of an alpha and a beta subunit. The beta subunit determines specificity for ATP. Interacts with ALAS2. It depends on Mg(2+) as a cofactor.

Its subcellular location is the mitochondrion. The enzyme catalyses succinate + ATP + CoA = succinyl-CoA + ADP + phosphate. It participates in carbohydrate metabolism; tricarboxylic acid cycle; succinate from succinyl-CoA (ligase route): step 1/1. Its function is as follows. ATP-specific succinyl-CoA synthetase functions in the citric acid cycle (TCA), coupling the hydrolysis of succinyl-CoA to the synthesis of ATP and thus represents the only step of substrate-level phosphorylation in the TCA. The beta subunit provides nucleotide specificity of the enzyme and binds the substrate succinate, while the binding sites for coenzyme A and phosphate are found in the alpha subunit. The polypeptide is Succinate--CoA ligase [ADP-forming] subunit beta, mitochondrial (Mus musculus (Mouse)).